A 154-amino-acid polypeptide reads, in one-letter code: 6,7-dimethyl-8-ribityllumazine synthase (154 aa).

5-amino-6-(D-ribitylamino)uracil is bound by residues Phe-22, 56–58 (SFE), and 80–82 (AVI). (2S)-2-hydroxy-3-oxobutyl phosphate is bound at residue 85–86 (ST). His-88 functions as the Proton donor in the catalytic mechanism. Position 113 (Tyr-113) interacts with 5-amino-6-(D-ribitylamino)uracil. (2S)-2-hydroxy-3-oxobutyl phosphate is bound at residue Arg-127.

The protein belongs to the DMRL synthase family. Forms an icosahedral capsid composed of 60 subunits, arranged as a dodecamer of pentamers.

The catalysed reaction is (2S)-2-hydroxy-3-oxobutyl phosphate + 5-amino-6-(D-ribitylamino)uracil = 6,7-dimethyl-8-(1-D-ribityl)lumazine + phosphate + 2 H2O + H(+). It functions in the pathway cofactor biosynthesis; riboflavin biosynthesis; riboflavin from 2-hydroxy-3-oxobutyl phosphate and 5-amino-6-(D-ribitylamino)uracil: step 1/2. Functionally, catalyzes the formation of 6,7-dimethyl-8-ribityllumazine by condensation of 5-amino-6-(D-ribitylamino)uracil with 3,4-dihydroxy-2-butanone 4-phosphate. This is the penultimate step in the biosynthesis of riboflavin. The polypeptide is 6,7-dimethyl-8-ribityllumazine synthase (Sulfurihydrogenibium sp. (strain YO3AOP1)).